Here is a 461-residue protein sequence, read N- to C-terminus: Serine/threonine-protein kinase ppk24, mitochondrial (461 aa).

Residues F120–V416 enclose the Protein kinase domain. Residues I126 to I134 and K153 each bind ATP. The active-site Proton acceptor is the D256.

Belongs to the protein kinase superfamily. Ser/Thr protein kinase family.

The protein localises to the mitochondrion. It catalyses the reaction L-seryl-[protein] + ATP = O-phospho-L-seryl-[protein] + ADP + H(+). It carries out the reaction L-threonyl-[protein] + ATP = O-phospho-L-threonyl-[protein] + ADP + H(+). In terms of biological role, has a role late in meiosis. In Schizosaccharomyces pombe (strain 972 / ATCC 24843) (Fission yeast), this protein is Serine/threonine-protein kinase ppk24, mitochondrial (ppk24).